Here is a 545-residue protein sequence, read N- to C-terminus: Ribulokinase (545 aa).

This sequence belongs to the ribulokinase family.

It carries out the reaction D-ribulose + ATP = D-ribulose 5-phosphate + ADP + H(+). The catalysed reaction is L-ribulose + ATP = L-ribulose 5-phosphate + ADP + H(+). It functions in the pathway carbohydrate degradation; L-arabinose degradation via L-ribulose; D-xylulose 5-phosphate from L-arabinose (bacterial route): step 2/3. This chain is Ribulokinase, found in Staphylococcus aureus (strain Mu3 / ATCC 700698).